The chain runs to 524 residues: Probable glycine dehydrogenase (decarboxylating) subunit 2 (524 aa).

Lys296 bears the N6-(pyridoxal phosphate)lysine mark.

This sequence belongs to the GcvP family. C-terminal subunit subfamily. The glycine cleavage system is composed of four proteins: P, T, L and H. In this organism, the P 'protein' is a heterodimer of two subunits. The cofactor is pyridoxal 5'-phosphate.

It carries out the reaction N(6)-[(R)-lipoyl]-L-lysyl-[glycine-cleavage complex H protein] + glycine + H(+) = N(6)-[(R)-S(8)-aminomethyldihydrolipoyl]-L-lysyl-[glycine-cleavage complex H protein] + CO2. In terms of biological role, the glycine cleavage system catalyzes the degradation of glycine. The P protein binds the alpha-amino group of glycine through its pyridoxal phosphate cofactor; CO(2) is released and the remaining methylamine moiety is then transferred to the lipoamide cofactor of the H protein. The chain is Probable glycine dehydrogenase (decarboxylating) subunit 2 from Caulobacter vibrioides (strain ATCC 19089 / CIP 103742 / CB 15) (Caulobacter crescentus).